The primary structure comprises 385 residues: MKLVRKNIEKDNAGQVTLVPEEPEDMWHTYNLVQVGDSLRASTIRKVQTESSTGSVGSNRVRTTLTLCVEAIDFDSQACQLRVKGTNIQENEYVKMGAYHTIELEPNRQFTLAKKQWDSVVLERIEQACDPAWSADVAAVVMQEGLAHICLVTPSMTLTRAKVEVNIPRKRKGNCSQHDRALERFYEQVVQAIQRHIHFDVVKCILVASPGFVREQFCDYMFQQAVKTDNKLLLENRSKFLQVHASSGHKYSLKEVLCDPTVASRLSDTKAAGEVKALDDFYKMLQHGPDRAFYGLKQVEKANEAMAIDTLLISDELFRHQDVATRSRYVRLVDSVKENAGTVRIFSSLHVSGEQLSQLTGVAAILRFPVPELSDQEDDSSSEED.

Lysine 162 is covalently cross-linked (Glycyl lysine isopeptide (Lys-Gly) (interchain with G-Cter in SUMO2)). Serine 374, serine 380, serine 381, and serine 382 each carry phosphoserine.

This sequence belongs to the eukaryotic release factor 1 family. Pelota subfamily. Component of the Pelota-HBS1L complex, also named Dom34-Hbs1 complex, composed of PELO and HBS1L. Interacts with PINK1. Interacts with ABCE1. Interacts with CNOT4. Requires a divalent metal cation as cofactor.

It is found in the cytoplasm. Its function is as follows. Component of the Pelota-HBS1L complex, a complex that recognizes stalled ribosomes and triggers the No-Go Decay (NGD) pathway. In the Pelota-HBS1L complex, PELO recognizes ribosomes stalled at the 3' end of an mRNA and engages stalled ribosomes by destabilizing mRNA in the mRNA channel. Following mRNA extraction from stalled ribosomes by the SKI complex, the Pelota-HBS1L complex promotes recruitment of ABCE1, which drives the disassembly of stalled ribosomes, followed by degradation of damaged mRNAs as part of the NGD pathway. As part of the PINK1-regulated signaling, upon mitochondrial damage is recruited to the ribosome/mRNA-ribonucleoprotein complex associated to mitochondrial outer membrane thereby enabling the recruitment of autophagy receptors and induction of mitophagy. In Pongo abelii (Sumatran orangutan), this protein is Protein pelota homolog (PELO).